A 349-amino-acid chain; its full sequence is 4-hydroxy-3-methylbut-2-en-1-yl diphosphate synthase (flavodoxin) (349 aa).

[4Fe-4S] cluster is bound by residues C264, C267, C299, and E306.

Belongs to the IspG family. [4Fe-4S] cluster serves as cofactor.

It carries out the reaction (2E)-4-hydroxy-3-methylbut-2-enyl diphosphate + oxidized [flavodoxin] + H2O + 2 H(+) = 2-C-methyl-D-erythritol 2,4-cyclic diphosphate + reduced [flavodoxin]. The protein operates within isoprenoid biosynthesis; isopentenyl diphosphate biosynthesis via DXP pathway; isopentenyl diphosphate from 1-deoxy-D-xylulose 5-phosphate: step 5/6. Its function is as follows. Converts 2C-methyl-D-erythritol 2,4-cyclodiphosphate (ME-2,4cPP) into 1-hydroxy-2-methyl-2-(E)-butenyl 4-diphosphate. In Clostridium tetani (strain Massachusetts / E88), this protein is 4-hydroxy-3-methylbut-2-en-1-yl diphosphate synthase (flavodoxin).